Here is an 898-residue protein sequence, read N- to C-terminus: Methionine--tRNA ligase, cytoplasmic (898 aa).

In terms of domain architecture, GST C-terminal spans 74 to 198 (GWEQDDLTNQ…VLKQQGVLAL (125 aa)). The short motif at 273–283 (PYVNNVPHLGN) is the 'HIGH' region element. The 'KMSKS' region signature appears at 593–597 (KFSKS). Lys596 contributes to the ATP binding site. Position 825 is a phosphoserine (Ser825). Thr833 is modified (phosphothreonine). In terms of domain architecture, WHEP-TRS spans 839–895 (QIQALTEEVTKQGNIVRELKAQKADKNQIAAEVAKLLDLKKQLALAEGKPLETSKGK).

This sequence belongs to the class-I aminoacyl-tRNA synthetase family. As to quaternary structure, monomer. Part of a multisubunit complex that groups tRNA ligases for Arg (RARS1), Asp (DARS1), Gln (QARS1), Ile (IARS1), Leu (LARS1), Lys (KARS1), Met (MARS1) the bifunctional ligase for Glu and Pro (EPRS1) and the auxiliary subunits AIMP1/p43, AIMP2/p38 and EEF1E1/p18. Forms a linear complex that contains MARS1, EEF1E1, EPRS1 and AIMP2 that is at the core of the multisubunit complex.

The protein resides in the cytoplasm. Its subcellular location is the cytosol. The protein localises to the nucleus. It is found in the nucleolus. The catalysed reaction is tRNA(Met) + L-methionine + ATP = L-methionyl-tRNA(Met) + AMP + diphosphate. In terms of biological role, catalyzes the specific attachment of an amino acid to its cognate tRNA in a 2 step reaction: the amino acid (AA) is first activated by ATP to form AA-AMP and then transferred to the acceptor end of the tRNA. Plays a role in the synthesis of ribosomal RNA in the nucleolus. In Bos taurus (Bovine), this protein is Methionine--tRNA ligase, cytoplasmic (MARS1).